A 611-amino-acid polypeptide reads, in one-letter code: Chaperonin 60 subunit beta 4, chloroplastic (611 aa).

A chloroplast-targeting transit peptide spans 1-37 (MAFSQAALSALPLSDRTFRKKPSSSSSSSPNFVLRVR). A coiled-coil region spans residues 377–480 (QKAVDERVSQ…LDNTEQKIGA (104 aa)). A disordered region spans residues 574-595 (INPPLPTSSPATSSMFPDRKLP).

Belongs to the chaperonin (HSP60) family. In terms of assembly, part of the Cpn60 complex composed of 7 alpha and 7 beta subunits. Can also form a complex composed of 14 beta subunits only. Both complexes show ATPase activity. The Cpn60 complex interacts with the Cpn10 complex. Interacts with NDHH.

The protein localises to the plastid. The protein resides in the chloroplast stroma. Involved specifically in the folding of NDHH, a subunit of the chloroplast NADH dehydrogenase-like complex (NDH). This Arabidopsis thaliana (Mouse-ear cress) protein is Chaperonin 60 subunit beta 4, chloroplastic (CPN60B4).